The sequence spans 338 residues: MDMQGAIRLVTEGTDLTEAEMTEVMRQIMTGEATPAQIGGFLIGLRMKGETVAEITAAARVMRELATRVTVDEPHLLDTCGTGGDASHTLNVSTACAFVAAAGGARVAKHGNRSVSSSCGSADVLEAAGARLDLNADQVAECIRRVGVGFLFAPQHHSAMKHAIGPRREMGVRTLFNILGPLTNPAGAPHQLLGVYNKHWVVPVAETLRALGSRRVLVVHADDGLDEISIGSDTLVAELNEGEIHEYRITPEQFGLPRAELSDLQVGTAEESLALIREAFAGWEGPAFNIIAINAGAALYAAEKAPTLDAGVAGAAELLRNGSALRKLEAFVRCTREV.

5-phospho-alpha-D-ribose 1-diphosphate contacts are provided by residues Gly81, 84–85, Thr89, 91–94, 109–117, and Ser121; these read GD, NVST, and KHGNRSVSS. Gly81 lines the anthranilate pocket. Residue Ser93 participates in Mg(2+) binding. Asn112 contributes to the anthranilate binding site. Arg167 contacts anthranilate. Asp226 and Glu227 together coordinate Mg(2+).

The protein belongs to the anthranilate phosphoribosyltransferase family. Homodimer. The cofactor is Mg(2+).

The enzyme catalyses N-(5-phospho-beta-D-ribosyl)anthranilate + diphosphate = 5-phospho-alpha-D-ribose 1-diphosphate + anthranilate. Its pathway is amino-acid biosynthesis; L-tryptophan biosynthesis; L-tryptophan from chorismate: step 2/5. Functionally, catalyzes the transfer of the phosphoribosyl group of 5-phosphorylribose-1-pyrophosphate (PRPP) to anthranilate to yield N-(5'-phosphoribosyl)-anthranilate (PRA). The protein is Anthranilate phosphoribosyltransferase of Alkalilimnicola ehrlichii (strain ATCC BAA-1101 / DSM 17681 / MLHE-1).